Reading from the N-terminus, the 52-residue chain is MVNNDAKIGRREFYDRVESVRPKSPPRERPTYTYSNSRTVDGYSNRGPRADF.

Residues 1 to 52 form a disordered region; that stretch reads MVNNDAKIGRREFYDRVESVRPKSPPRERPTYTYSNSRTVDGYSNRGPRADF. A compositionally biased stretch (basic and acidic residues) spans 7-30; the sequence is KIGRREFYDRVESVRPKSPPRERP.

This is an uncharacterized protein from Dictyostelium discoideum (Social amoeba).